The sequence spans 317 residues: Olfactory receptor 10AD1 (317 aa).

Over 1-25 the chain is Extracellular; sequence MLRNGSIVTEFILVGFQQSSTSTRA. Asn-4 carries N-linked (GlcNAc...) asparagine glycosylation. The helical transmembrane segment at 26–46 threads the bilayer; it reads LLFALFLALYSLTMAMNGLII. The Cytoplasmic portion of the chain corresponds to 47 to 55; it reads FITSWTDPK. Residues 56–76 form a helical membrane-spanning segment; sequence LNSPMYFFLGHLSLLDVCFIT. Over 77 to 100 the chain is Extracellular; sequence TTIPQMLIHLVVRDHIVSFVCCMT. An intrachain disulfide couples Cys-98 to Cys-190. Residues 101–121 form a helical membrane-spanning segment; sequence QMYFVFCVGVAECILLAFMAY. Residues 122–140 lie on the Cytoplasmic side of the membrane; that stretch reads DRYVAICYPLNYVPIISQK. A helical transmembrane segment spans residues 141-161; sequence VCVRLVGTAWFFGLINGIFLE. At 162–198 the chain is on the extracellular side; it reads YISFREPFRRDNHIESFFCEAPIVIGLSCGDPQFSLW. The helical transmembrane segment at 199 to 218 threads the bilayer; the sequence is AIFADAIVVILSPMVLTVTS. Topologically, residues 219–238 are cytoplasmic; the sequence is YVHILATILSKASSSGRGKT. Residues 239-259 traverse the membrane as a helical segment; that stretch reads FSTCASHLTVVIFLYTSAMFS. At 260-272 the chain is on the extracellular side; that stretch reads YMNPHSTHGPDKD. The chain crosses the membrane as a helical span at residues 273 to 293; that stretch reads KPFSLLYTIITPMCNPIIYSF. The Cytoplasmic segment spans residues 294 to 317; that stretch reads RNKEIKEAMVRALGRTRLAQPQSV.

The protein belongs to the G-protein coupled receptor 1 family.

The protein resides in the cell membrane. Functionally, odorant receptor. The protein is Olfactory receptor 10AD1 (OR10AD1) of Homo sapiens (Human).